The following is a 113-amino-acid chain: Tachykinin-4 (113 aa).

The signal sequence occupies residues 1–20; it reads MLPCLALLLLMELSVCTVAG. Methionine amide is present on methionine 67. Positions 71–79 are excised as a propeptide; it reads VGGRPLIQP. Leucine 95 is subject to Leucine amide. A propeptide spanning residues 98 to 113 is cleaved from the precursor; sequence RSLFTEGREDEAQGSE.

Belongs to the tachykinin family. In terms of tissue distribution, expressed at low levels in the uterus of both pregnant and non-pregnant women. Isoform 1 is found only in the adrenal gland and fetal liver. Isoform 2 is found in heart, liver, bone marrow, prostate, adrenal gland and testis. Isoform 3 and isoform 4 are expressed predominantly in adrenal gland and placenta.

The protein resides in the secreted. Tachykinins are active peptides which excite neurons, evoke behavioral responses, are potent vasodilators and secretagogues, and contract (directly or indirectly) many smooth muscles. Endokinin-A induces thermal hyperalgesia and pain-related behavior such as scratching following intrathecal administration in rats. These effects are suppressed by treatment with endokinin-C. Endokinin-A/B reduces arterial blood pressure and increases sperm motility. The sequence is that of Tachykinin-4 from Homo sapiens (Human).